The following is a 492-amino-acid chain: Bifunctional purine biosynthesis protein PurH (492 aa).

In terms of domain architecture, MGS-like spans 1 to 144 (MKKVILSVSD…KNFKHVTTIV (144 aa)).

Belongs to the PurH family.

It catalyses the reaction (6R)-10-formyltetrahydrofolate + 5-amino-1-(5-phospho-beta-D-ribosyl)imidazole-4-carboxamide = 5-formamido-1-(5-phospho-D-ribosyl)imidazole-4-carboxamide + (6S)-5,6,7,8-tetrahydrofolate. The catalysed reaction is IMP + H2O = 5-formamido-1-(5-phospho-D-ribosyl)imidazole-4-carboxamide. Its pathway is purine metabolism; IMP biosynthesis via de novo pathway; 5-formamido-1-(5-phospho-D-ribosyl)imidazole-4-carboxamide from 5-amino-1-(5-phospho-D-ribosyl)imidazole-4-carboxamide (10-formyl THF route): step 1/1. The protein operates within purine metabolism; IMP biosynthesis via de novo pathway; IMP from 5-formamido-1-(5-phospho-D-ribosyl)imidazole-4-carboxamide: step 1/1. This is Bifunctional purine biosynthesis protein PurH from Staphylococcus carnosus (strain TM300).